The sequence spans 430 residues: Synaptotagmin-11 (430 aa).

Topologically, residues 1-15 (MAEITNIRPSFDVSP) are vesicular. The chain crosses the membrane as a helical span at residues 16–36 (VAAGLIGASVLVVCVSVTVFV). Residues 37–430 (WTCCHQQAEK…VAKWHSLSEY (394 aa)) lie on the Cytoplasmic side of the membrane. Residues 132–154 (RSPMTSLTPGESKPTSPSSPEED) form a disordered region. A Phosphoserine modification is found at serine 133. Positions 140-150 (PGESKPTSPSS) are enriched in low complexity. C2 domains lie at 156 to 278 (MLGS…QLTR) and 290 to 425 (SRGE…AKWH). Ca(2+)-binding residues include aspartate 249, serine 252, and aspartate 255.

Belongs to the synaptotagmin family. Homodimer. Can also form heterodimers. Interacts with PRKN. Interacts (via C2 2 domain) with AGO2 and SND1; the interaction with SND1 is direct. Interacts with KIF1A; the interaction increases in presence of calcium. Ca(2+) is required as a cofactor. Ubiquitinated, at least by PRKN, and targeted to the proteasome complex for degradation. Ubiquitination is inhibited by ATP13A2. Highly expressed in brain and at lower levels in other tissues.

The protein resides in the cytoplasmic vesicle membrane. It localises to the perikaryon. The protein localises to the golgi apparatus. Its subcellular location is the trans-Golgi network membrane. It is found in the recycling endosome membrane. The protein resides in the lysosome membrane. It localises to the cytoplasmic vesicle. The protein localises to the phagosome. Its subcellular location is the cell projection. It is found in the axon. The protein resides in the dendrite. It localises to the postsynaptic density. The protein localises to the clathrin-coated vesicle membrane. Synaptotagmin family member involved in vesicular and membrane trafficking which does not bind Ca(2+). Inhibits clathrin-mediated and bulk endocytosis in neurons, functions to ensure precision in vesicle retrieval. Plays an important role in dopamine transmission by regulating endocytosis and the vesicle-recycling process. Essential component of a neuronal vesicular trafficking pathway that differs from the synaptic vesicle trafficking pathway but is crucial for development and synaptic plasticity. In macrophages and microglia, inhibits the conventional cytokine secretion, of at least IL6 and TNF, and phagocytosis. In astrocytes, regulates lysosome exocytosis, mechanism required for the repair of injured astrocyte cell membrane. Required for the ATP13A2-mediated regulation of the autophagy-lysosome pathway. The polypeptide is Synaptotagmin-11 (Rattus norvegicus (Rat)).